The primary structure comprises 647 residues: Acetyl-coenzyme A synthetase (647 aa).

Residues 192-195 (RGGR), Thr-310, and Asn-334 contribute to the CoA site. ATP contacts are provided by residues 386–388 (GEP), 410–415 (DTWWQT), Asp-499, and Arg-514. Ser-522 contacts CoA. ATP is bound at residue Arg-525. Residues Val-536, His-538, and Val-541 each contribute to the Mg(2+) site. Arg-583 contributes to the CoA binding site. N6-acetyllysine is present on Lys-608.

It belongs to the ATP-dependent AMP-binding enzyme family. The cofactor is Mg(2+). Post-translationally, acetylated. Deacetylation by the SIR2-homolog deacetylase activates the enzyme.

It catalyses the reaction acetate + ATP + CoA = acetyl-CoA + AMP + diphosphate. In terms of biological role, catalyzes the conversion of acetate into acetyl-CoA (AcCoA), an essential intermediate at the junction of anabolic and catabolic pathways. AcsA undergoes a two-step reaction. In the first half reaction, AcsA combines acetate with ATP to form acetyl-adenylate (AcAMP) intermediate. In the second half reaction, it can then transfer the acetyl group from AcAMP to the sulfhydryl group of CoA, forming the product AcCoA. This Caulobacter vibrioides (strain ATCC 19089 / CIP 103742 / CB 15) (Caulobacter crescentus) protein is Acetyl-coenzyme A synthetase.